Consider the following 156-residue polypeptide: Putative increased recombination centers protein 11 (156 aa).

The helical transmembrane segment at 20–42 (AALGATCLLHYLTTSLSIRFFFH) threads the bilayer.

The protein resides in the membrane. The sequence is that of Putative increased recombination centers protein 11 (IRC11) from Saccharomyces cerevisiae (strain ATCC 204508 / S288c) (Baker's yeast).